A 286-amino-acid polypeptide reads, in one-letter code: Bifunctional protein FolD (286 aa).

Residues 170–172 (GHS) and Ile236 each bind NADP(+).

The protein belongs to the tetrahydrofolate dehydrogenase/cyclohydrolase family. As to quaternary structure, homodimer.

The enzyme catalyses (6R)-5,10-methylene-5,6,7,8-tetrahydrofolate + NADP(+) = (6R)-5,10-methenyltetrahydrofolate + NADPH. It catalyses the reaction (6R)-5,10-methenyltetrahydrofolate + H2O = (6R)-10-formyltetrahydrofolate + H(+). Its pathway is one-carbon metabolism; tetrahydrofolate interconversion. Functionally, catalyzes the oxidation of 5,10-methylenetetrahydrofolate to 5,10-methenyltetrahydrofolate and then the hydrolysis of 5,10-methenyltetrahydrofolate to 10-formyltetrahydrofolate. The sequence is that of Bifunctional protein FolD from Methanococcoides burtonii (strain DSM 6242 / NBRC 107633 / OCM 468 / ACE-M).